Reading from the N-terminus, the 880-residue chain is Valine--tRNA ligase (880 aa).

Residues 51–61 carry the 'HIGH' region motif; sequence PNVTGELHLGH. The short motif at 529-533 is the 'KMSKS' region element; sequence KMSKT. Lys532 contacts ATP. The stretch at 815 to 854 forms a coiled coil; that stretch reads MSTMVDLEAEAKRVEAEIAELETQIERLSARLSDTQFLAK.

The protein belongs to the class-I aminoacyl-tRNA synthetase family. ValS type 1 subfamily. In terms of assembly, monomer.

Its subcellular location is the cytoplasm. It carries out the reaction tRNA(Val) + L-valine + ATP = L-valyl-tRNA(Val) + AMP + diphosphate. Its function is as follows. Catalyzes the attachment of valine to tRNA(Val). As ValRS can inadvertently accommodate and process structurally similar amino acids such as threonine, to avoid such errors, it has a 'posttransfer' editing activity that hydrolyzes mischarged Thr-tRNA(Val) in a tRNA-dependent manner. This chain is Valine--tRNA ligase, found in Dehalococcoides mccartyi (strain ATCC BAA-2266 / KCTC 15142 / 195) (Dehalococcoides ethenogenes (strain 195)).